The primary structure comprises 165 residues: Putative 1,2-phenylacetyl-CoA epoxidase, subunit D (165 aa).

In terms of assembly, monomer.

It participates in aromatic compound metabolism; phenylacetate degradation. In terms of biological role, possible component of 1,2-phenylacetyl-CoA epoxidase multicomponent enzyme system which catalyzes the reduction of phenylacetyl-CoA (PA-CoA) to form 1,2-epoxyphenylacetyl-CoA. The subunit D may have a function related to the maturation of the monooxygenase complex, rather than direct involvement in catalysis. PaaD could assist either in maturation of PaaE or PaaA. In Escherichia coli (strain K12), this protein is Putative 1,2-phenylacetyl-CoA epoxidase, subunit D (paaD).